Here is a 76-residue protein sequence, read N- to C-terminus: MEELLKYIVASLVEFPEEIVIREIEGEEQNIIELRVSPKDVGKVIGKNGRIAKSLRAILTAASVKAGKNFSLEIID.

One can recognise a KH domain in the interval 29 to 76 (QNIIELRVSPKDVGKVIGKNGRIAKSLRAILTAASVKAGKNFSLEIID).

It belongs to the KhpA RNA-binding protein family. In terms of assembly, forms a complex with KhpB.

Its subcellular location is the cytoplasm. A probable RNA chaperone. Forms a complex with KhpB which binds to cellular RNA and controls its expression. Plays a role in peptidoglycan (PG) homeostasis and cell length regulation. The protein is RNA-binding protein KhpA of Leptospira interrogans serogroup Icterohaemorrhagiae serovar copenhageni (strain Fiocruz L1-130).